The chain runs to 258 residues: tRNA pseudouridine synthase A (258 aa).

Asp61 serves as the catalytic Nucleophile. Tyr119 is a substrate binding site.

Belongs to the tRNA pseudouridine synthase TruA family. In terms of assembly, homodimer.

It carries out the reaction uridine(38/39/40) in tRNA = pseudouridine(38/39/40) in tRNA. Its function is as follows. Formation of pseudouridine at positions 38, 39 and 40 in the anticodon stem and loop of transfer RNAs. This chain is tRNA pseudouridine synthase A, found in Chlorobium phaeobacteroides (strain DSM 266 / SMG 266 / 2430).